Here is a 487-residue protein sequence, read N- to C-terminus: Acetyl-coenzyme A carboxylase carboxyl transferase subunit beta, chloroplastic (487 aa).

A CoA carboxyltransferase N-terminal domain is found at 223–487 (LWIQCDNCYG…FFPLKKNEIK (265 aa)). Zn(2+)-binding residues include Cys-227, Cys-230, Cys-243, and Cys-246. Residues 227–246 (CDNCYGLMYKKVKMNVCEQC) form a C4-type zinc finger.

It belongs to the AccD/PCCB family. In terms of assembly, acetyl-CoA carboxylase is a heterohexamer composed of biotin carboxyl carrier protein, biotin carboxylase and 2 subunits each of ACCase subunit alpha and ACCase plastid-coded subunit beta (accD). Zn(2+) serves as cofactor.

It is found in the plastid. The protein localises to the chloroplast stroma. It catalyses the reaction N(6)-carboxybiotinyl-L-lysyl-[protein] + acetyl-CoA = N(6)-biotinyl-L-lysyl-[protein] + malonyl-CoA. The protein operates within lipid metabolism; malonyl-CoA biosynthesis; malonyl-CoA from acetyl-CoA: step 1/1. Component of the acetyl coenzyme A carboxylase (ACC) complex. Biotin carboxylase (BC) catalyzes the carboxylation of biotin on its carrier protein (BCCP) and then the CO(2) group is transferred by the transcarboxylase to acetyl-CoA to form malonyl-CoA. The chain is Acetyl-coenzyme A carboxylase carboxyl transferase subunit beta, chloroplastic from Lepidium virginicum (Virginia pepperweed).